The following is a 254-amino-acid chain: Pimeloyl-[acyl-carrier protein] methyl ester esterase (254 aa).

The AB hydrolase-1 domain maps to 16 to 242 (LVLIHGWGMN…ASHAPFISHP (227 aa)). Residues Trp-22, 82 to 83 (SL), and 143 to 147 (FLALQ) each bind substrate. The Nucleophile role is filled by Ser-82. Active-site residues include Asp-207 and His-235. Residue His-235 coordinates substrate.

The protein belongs to the AB hydrolase superfamily. Carboxylesterase BioH family. Monomer.

Its subcellular location is the cytoplasm. It carries out the reaction 6-carboxyhexanoyl-[ACP] methyl ester + H2O = 6-carboxyhexanoyl-[ACP] + methanol + H(+). It participates in cofactor biosynthesis; biotin biosynthesis. In terms of biological role, the physiological role of BioH is to remove the methyl group introduced by BioC when the pimeloyl moiety is complete. It allows to synthesize pimeloyl-ACP via the fatty acid synthetic pathway through the hydrolysis of the ester bonds of pimeloyl-ACP esters. The polypeptide is Pimeloyl-[acyl-carrier protein] methyl ester esterase (Photobacterium profundum (strain SS9)).